The following is a 34-amino-acid chain: NU-buthitoxin-Ptr1a (34 aa).

Intrachain disulfides connect C6-C27, C12-C32, and C16-C34.

In terms of tissue distribution, expressed by the venom gland.

It localises to the secreted. Functionally, toxin that acts as an agonist on melanocortin receptors (MC1R, MC3R, MC5R, MC5R). After binding to MC1R, the peptide activates the hMC1R/Gs pathway, but after binding to MC4R, it is not able to activate or antagonize the MC4R/Gs pathway. Inhibits melanocyte stimulating hormone (MSH)-binding to human receptors (Ki=2.9 uM to MC1R, Ki=3.9 uM to MC3R, Ki=2.6 uM to MC4R, Ki=2.2 uM to MC5R). This toxin is structurally unrelated to the natural agonists. The sequence is that of NU-buthitoxin-Ptr1a from Parabuthus transvaalicus (Transvaal thick-tailed scorpion).